A 621-amino-acid polypeptide reads, in one-letter code: Phytoene desaturase (621 aa).

The signal sequence occupies residues 1-23; it reads MPSTSKRPTAIVIGSGVGGVSTA. The tract at residues 394 to 425 is disordered; that stretch reads HASQAHQLSASRNGHISSASPPDQPGLTPTEK. Polar residues predominate over residues 397-414; it reads QAHQLSASRNGHISSASP. Residues 598–618 traverse the membrane as a helical segment; it reads WEQWVSVLIYLLVGIFAWLWM.

The protein belongs to the carotenoid/retinoid oxidoreductase family. Requires NAD(+) as cofactor.

The protein localises to the membrane. The catalysed reaction is 15-cis-phytoene + 5 A = all-trans-3,4-didehydrolycopene + 5 AH2. The protein operates within carotenoid biosynthesis; lycopene biosynthesis. Its function is as follows. Phytoene desaturase involved in the carotenoid biosynthesis pathway. Converts phytoene into 3,4-didehydrolycopene via the intermediary of phytofluene, zeta-carotene, neurosporene and lycopene, by introducing up to five double bonds into phytoene. The sequence is that of Phytoene desaturase (PDH1) from Cercospora nicotianae (Barn spot disease fungus).